A 272-amino-acid polypeptide reads, in one-letter code: Ethanolamine ammonia-lyase small subunit (272 aa).

Adenosylcob(III)alamin-binding residues include Val161, Glu182, and Cys211.

Belongs to the EutC family. The basic unit is a heterodimer which dimerizes to form tetramers. The heterotetramers trimerize; 6 large subunits form a core ring with 6 small subunits projecting outwards. Requires adenosylcob(III)alamin as cofactor.

It localises to the bacterial microcompartment. The enzyme catalyses ethanolamine = acetaldehyde + NH4(+). Its pathway is amine and polyamine degradation; ethanolamine degradation. Catalyzes the deamination of various vicinal amino-alcohols to oxo compounds. Allows this organism to utilize ethanolamine as the sole source of nitrogen and carbon in the presence of external vitamin B12. This is Ethanolamine ammonia-lyase small subunit from Pseudomonas putida (strain ATCC 700007 / DSM 6899 / JCM 31910 / BCRC 17059 / LMG 24140 / F1).